Reading from the N-terminus, the 185-residue chain is ATP-dependent protease subunit HslV (185 aa).

T2 is a catalytic residue. 3 residues coordinate Na(+): G157, C160, and T163.

Belongs to the peptidase T1B family. HslV subfamily. A double ring-shaped homohexamer of HslV is capped on each side by a ring-shaped HslU homohexamer. The assembly of the HslU/HslV complex is dependent on binding of ATP.

It localises to the cytoplasm. It catalyses the reaction ATP-dependent cleavage of peptide bonds with broad specificity.. Its activity is regulated as follows. Allosterically activated by HslU binding. Protease subunit of a proteasome-like degradation complex believed to be a general protein degrading machinery. The chain is ATP-dependent protease subunit HslV from Vibrio cholerae serotype O1 (strain ATCC 39315 / El Tor Inaba N16961).